The chain runs to 95 residues: Alpha-conotoxin GeXXA (95 aa).

The first 21 residues, 1–21, serve as a signal peptide directing secretion; the sequence is MPKQEKMMLVLLILPLPYCNA. Positions 22–45 are excised as a propeptide; sequence AGVTTVQWGGHGDGLDRYLQRGVR. 4 disulfides stabilise this stretch: C64–C73, C69–C81, C74–C91, and C79–C93.

This sequence belongs to the conotoxin D superfamily. As to quaternary structure, homodimer. Pseudo-homodimer (identical sequence, different post-translational modifications). As to expression, expressed by the venom duct.

Its subcellular location is the secreted. In terms of biological role, alpha-D-conopeptides act as non-competitive inhibitors of nicotinic acetylcholine receptors (nAChR). Through its two C-terminal domains, this homodimeric protein would bind to two nAChR allosteric sites, located outside the nAChR C-loop of the principal binding face and at the adjacent binding interface in a clockwise direction. This toxin has strong inhibitory activity on rat alpha-9-alpha-10 (CHRNA9-CHRNA10) (IC(50)=1.2 nM) and a moderate inhibitory activity on human alpha-7 (CHRNA7) (IC(50)=210 nM), rat alpha-3-beta-2 (CHRNA3-CHRNB2) (IC(50)=498 nM), rat alpha-3-beta-4 (CHRNA3-CHRNB4) (IC(50)=614 nM) and rat alpha-1-beta-1-delta-epsilon (CHRNA1-CHRNB1-CHRNE-CHRND) (IC(50)=743 nM) subtypes. Shows a weaker inhibitory activity on human alpha-9-alpha-10 (IC(50)=28 nM) than on the rat channel. This is explained by a different residue in the probable binding site (His-31 in rat alpha-10 and Leu-31 in human). The chain is Alpha-conotoxin GeXXA from Conus generalis (General cone).